A 352-amino-acid polypeptide reads, in one-letter code: Lipopolysaccharide core biosynthesis mannosyltransferase LpcC (352 aa).

Belongs to the glycosyltransferase group 1 family. Glycosyltransferase 4 subfamily.

It participates in bacterial outer membrane biogenesis; LPS core biosynthesis. Functionally, acts at transfer of mannose group to a 3-deoxy-D-mono octulonic acid (KDO) via an alpha-1,5 linkage. In Rhizobium leguminosarum bv. viciae, this protein is Lipopolysaccharide core biosynthesis mannosyltransferase LpcC (lpcC).